The chain runs to 314 residues: Methionyl-tRNA formyltransferase (314 aa).

Ser-108 to Pro-111 lines the (6S)-5,6,7,8-tetrahydrofolate pocket.

The protein belongs to the Fmt family.

The enzyme catalyses L-methionyl-tRNA(fMet) + (6R)-10-formyltetrahydrofolate = N-formyl-L-methionyl-tRNA(fMet) + (6S)-5,6,7,8-tetrahydrofolate + H(+). Functionally, attaches a formyl group to the free amino group of methionyl-tRNA(fMet). The formyl group appears to play a dual role in the initiator identity of N-formylmethionyl-tRNA by promoting its recognition by IF2 and preventing the misappropriation of this tRNA by the elongation apparatus. This Akkermansia muciniphila (strain ATCC BAA-835 / DSM 22959 / JCM 33894 / BCRC 81048 / CCUG 64013 / CIP 107961 / Muc) protein is Methionyl-tRNA formyltransferase.